The following is a 270-amino-acid chain: Putative pyruvate, phosphate dikinase regulatory protein (270 aa).

Residue 151-158 (GVSRTSKT) coordinates ADP.

Belongs to the pyruvate, phosphate/water dikinase regulatory protein family. PDRP subfamily.

It carries out the reaction N(tele)-phospho-L-histidyl/L-threonyl-[pyruvate, phosphate dikinase] + ADP = N(tele)-phospho-L-histidyl/O-phospho-L-threonyl-[pyruvate, phosphate dikinase] + AMP + H(+). The enzyme catalyses N(tele)-phospho-L-histidyl/O-phospho-L-threonyl-[pyruvate, phosphate dikinase] + phosphate + H(+) = N(tele)-phospho-L-histidyl/L-threonyl-[pyruvate, phosphate dikinase] + diphosphate. Functionally, bifunctional serine/threonine kinase and phosphorylase involved in the regulation of the pyruvate, phosphate dikinase (PPDK) by catalyzing its phosphorylation/dephosphorylation. The polypeptide is Putative pyruvate, phosphate dikinase regulatory protein (Ligilactobacillus salivarius (strain UCC118) (Lactobacillus salivarius)).